Here is a 918-residue protein sequence, read N- to C-terminus: MDFKETLLLPKTDFPMRGNLPANEPKKYKTWFDTNIYEQMKAKREGAELFTLHDGPPYANGDIHIGHALNKILKDIILKYNYFQGKAVRMTPGWDCHGLPIEQKVEEKLGKSKKEAMPTEKFRELCRAHAGKFVDIQRDEFKSLGVVADWENPYVTMDFKFEANIYRTLCEVAKRGLLVERHKPIFWSWAARTALADAEVEYEDKEDYSIYVHFELSDAAKEKLGLEGKAGLVIWTTTPWTLPANTGISINPDEMYVLTDDGHIVADARYDAMIEEGVVAGHASRKIAATELDGLLAINPLNERPSKVVLGEHVMMDGGTGCVHTAPGHGEDDYKVGLENGLEVVMPVDERGCYDESVVGLDLLPDAEKFVGMHIFKANEPILELLGDNLLKVSKFTHSYPHCWRTKKPLIYRATNQWFISIDDAAKGSDKTLREAAVDAIDSVDFYPASSKNRLKPMVEGRPDWCISRQRSWGVPIAFFRVKSTKAVIFDEDVLEHVASLFDEHGADAWYSMSIAELLPAGSKYDPADLEKIEDILDVWFDSGSTWNSVLSSGNYDAGNYPASLYLEGSDQHRGWFQSSLLLSSAINGIAPYETIITHGFTMDAKGEKMSKSKGNVVAPEKVVKQFGSEILRLWVALSDYQNDQKISDDILKQTAEQYRKIRNTFRFLLANVNDLDALVSADAYGELDRWILNKADDVFASVKESFETYDFLKGFATLNHFITNELSGIYMDVTKDRLYCEAKDSDVRRATQSAMALISKAMLGLIAPVLTYTADEILAYAPAIFKGDIENVFDLVYEAVPETAASFDDAILLEAREKFSEAIDSLKKEKVIKATLELEIAGDRDLLPISDDKDLEDWFVVSAVKESSKGEQVASFKVEGRTFTVHKAMMAKCPRCWRFTSTSEDCLCERCAKVVGA.

The 'HIGH' region signature appears at 57–67; the sequence is PYANGDIHIGH. Glu-568 lines the L-isoleucyl-5'-AMP pocket. The 'KMSKS' region signature appears at 609–613; that stretch reads KMSKS. Lys-612 lines the ATP pocket. Positions 894, 897, 909, and 912 each coordinate Zn(2+).

Belongs to the class-I aminoacyl-tRNA synthetase family. IleS type 1 subfamily. Monomer. The cofactor is Zn(2+).

The protein resides in the cytoplasm. It catalyses the reaction tRNA(Ile) + L-isoleucine + ATP = L-isoleucyl-tRNA(Ile) + AMP + diphosphate. In terms of biological role, catalyzes the attachment of isoleucine to tRNA(Ile). As IleRS can inadvertently accommodate and process structurally similar amino acids such as valine, to avoid such errors it has two additional distinct tRNA(Ile)-dependent editing activities. One activity is designated as 'pretransfer' editing and involves the hydrolysis of activated Val-AMP. The other activity is designated 'posttransfer' editing and involves deacylation of mischarged Val-tRNA(Ile). This chain is Isoleucine--tRNA ligase, found in Sulfurovum sp. (strain NBC37-1).